A 303-amino-acid chain; its full sequence is Glutamate formimidoyltransferase (303 aa).

His-81 functions as the For formimidoyltransferase activity in the catalytic mechanism. 164 to 172 (GPSVVGKAG) lines the folate pocket.

It belongs to the formiminotransferase family.

It localises to the cytoplasm. The enzyme catalyses (6S)-5-formyl-5,6,7,8-tetrahydrofolate + L-glutamate = N-formyl-L-glutamate + (6S)-5,6,7,8-tetrahydrofolate + H(+). It catalyses the reaction 5-formimidoyltetrahydrofolate + L-glutamate = N-formimidoyl-L-glutamate + (6S)-5,6,7,8-tetrahydrofolate. The catalysed reaction is (6S)-5-formyl-5,6,7,8-tetrahydrofolate + ATP = (6R)-5,10-methenyltetrahydrofolate + ADP + phosphate. The protein operates within amino-acid degradation; L-histidine degradation into L-glutamate; L-glutamate from N-formimidoyl-L-glutamate (transferase route): step 1/1. Its pathway is one-carbon metabolism; tetrahydrofolate interconversion. Catalyzes the transfer of the formyl group from N-formylglutamate to tetrahydrofolate (THF) to yield 5-formyltetrahydrofolate (5-CHO-THF) and glutamate (Glu). The triglutamate form of 5-CHO-THF (5-CHO-THF-Glu3) can also be used as substrate. It can also catalyze the transfer of the formimino group from N-formiminoglutamate to tetrahydrofolate (THF) to yield 5-formiminotetrahydrofolate (5-NH=CH-THF) and glutamate (Glu). It can replace YgfA to catalyze the irreversible ATP-dependent transformation of 5-CHO-THF to form 5,10-methenyltetrahydrofolate (5,10-CH=THF). This Thermoplasma acidophilum (strain ATCC 25905 / DSM 1728 / JCM 9062 / NBRC 15155 / AMRC-C165) protein is Glutamate formimidoyltransferase.